Reading from the N-terminus, the 507-residue chain is Probable cytosol aminopeptidase (507 aa).

Mn(2+)-binding residues include K271 and D276. K283 is an active-site residue. The Mn(2+) site is built by D294, D353, and E355. Residue R357 is part of the active site.

The protein belongs to the peptidase M17 family. It depends on Mn(2+) as a cofactor.

The protein resides in the cytoplasm. It carries out the reaction Release of an N-terminal amino acid, Xaa-|-Yaa-, in which Xaa is preferably Leu, but may be other amino acids including Pro although not Arg or Lys, and Yaa may be Pro. Amino acid amides and methyl esters are also readily hydrolyzed, but rates on arylamides are exceedingly low.. The enzyme catalyses Release of an N-terminal amino acid, preferentially leucine, but not glutamic or aspartic acids.. Its function is as follows. Presumably involved in the processing and regular turnover of intracellular proteins. Catalyzes the removal of unsubstituted N-terminal amino acids from various peptides. The polypeptide is Probable cytosol aminopeptidase (Nitratidesulfovibrio vulgaris (strain ATCC 29579 / DSM 644 / CCUG 34227 / NCIMB 8303 / VKM B-1760 / Hildenborough) (Desulfovibrio vulgaris)).